The following is a 7760-amino-acid chain: Malpinin synthetase (7760 aa).

Disordered stretches follow at residues 42–115 (ENPE…VNEK) and 161–180 (LDLPTDRPRPSHPSFEGDRV). The segment covering 65–79 (TPRSASPLSSYTGSP) has biased composition (polar residues). The segment at 87-389 (TELSRTLSGD…LSLDERTFLL (303 aa)) is condensation 1. Residues 164 to 180 (PTDRPRPSHPSFEGDRV) show a composition bias toward basic and acidic residues. The segment at 409–813 (FEQQAERRPH…GRNDHQVKIR (405 aa)) is adenylation 1. The Carrier 1 domain maps to 926-1000 (PPQGELETAI…AFAHAIGQHR (75 aa)). At serine 961 the chain carries O-(pantetheine 4'-phosphoryl)serine. The segment at 1046 to 1477 (QDIYALAPLQ…VLPADERKLL (432 aa)) is dual epimerase/condensation (E/C) domain 1. An adenylation 2 region spans residues 1498–1893 (FEQYADRVPN…GRTDYQVKIR (396 aa)). Residues 2003-2077 (APEGEVENAI…ALAQSIGEHR (75 aa)) enclose the Carrier 2 domain. The residue at position 2038 (serine 2038) is an O-(pantetheine 4'-phosphoryl)serine. The tract at residues 2099 to 2558 (PLIDLNQNDI…LPTEERQLLT (460 aa)) is dual epimerase/condensation (E/C) domain 2. The segment at 2578 to 2973 (FEQHVDRAPD…GRADFQVKIR (396 aa)) is adenylation 3. In terms of domain architecture, Carrier 3 spans 3083-3157 (APQGAVEAAI…ALAQSIGEHR (75 aa)). Serine 3118 bears the O-(pantetheine 4'-phosphoryl)serine mark. Residues 3203-3634 (QDIYALAPLQ…HLNVLPAEER (432 aa)) form a dual epimerase/condensation (E/C) domain 3 region. The tract at residues 3658-4057 (FEQQAERTPD…GRNDDQIKIR (400 aa)) is adenylation 4. A Carrier 4 domain is found at 4174-4248 (APQGEVETAL…AFASRVQEQL (75 aa)). An O-(pantetheine 4'-phosphoryl)serine modification is found at serine 4209. Residues 4267-4705 (LPLSFAQQRL…AAEILSQDER (439 aa)) form a condensation 2 region. The interval 4729–5133 (FEQRVESTPD…GRNDHQVKIR (405 aa)) is adenylation 5. In terms of domain architecture, Carrier 5 spans 5250–5324 (APEGEVETAI…VFAASIGHHQ (75 aa)). Position 5285 is an O-(pantetheine 4'-phosphoryl)serine (serine 5285). The tract at residues 5370-5804 (QDIYSLSPLQ…VLPAEERTLL (435 aa)) is dual dehydration/condensation (C*) domain. The tract at residues 5825 to 6224 (FEQQSERTPE…GRNDDQVKIR (400 aa)) is adenylation 6. The Carrier 6 domain occupies 6338-6412 (APQGEVETAL…ALAQSIGQHH (75 aa)). Serine 6373 is subject to O-(pantetheine 4'-phosphoryl)serine. Residues 6458-6890 (QDIYALSPLQ…QLDTVPAEEH (433 aa)) are dual epimerase/condensation (E/C) domain 4. The adenylation 7 stretch occupies residues 6914-7300 (FEHQVERTPA…KFLPDGNVVC (387 aa)). One can recognise a Carrier 7 domain in the interval 7428 to 7503 (EPRGAIENIL…ELAPRLLATG (76 aa)). Serine 7463 carries the O-(pantetheine 4'-phosphoryl)serine modification. The interval 7561–7722 (DNGNMASSLD…KPYVQGSIEV (162 aa)) is thioesterase (TE) domain.

It belongs to the NRP synthetase family.

Its function is as follows. Heptamodular nonribosomal peptide synthetase that catalyzes the biosynthesis of malpinins, natural products that show biosurfactant activities. Malpinins are acetylated hexapeptides (Ac-D-Leu/Val-D-Arg-D-Leu/Val-L-Phe/Leu-Dhb-D-Trp) containing a non-canonical amino acid derived from dehydration of L-Trp, (Z)-dehydrobutyrine (Dhb), at position 5, as well as a C-terminal D-amino acid, D-tryptophan, that can be oxidized to kynurenine. Incorporated D-amino acids in positions 1, 3 and 4 are variable resulting in the malpinin A-congeners malpinin B to E. Both modules M1 and M3 have relaxed specificity towards aliphatic amino acids (L-Leu &gt; L-Met &gt; L/D-Val &gt; L-Cys), explaining Val at position 1 and 3 in malpinin A-congeners malpinin B to D. The incorporation of L-Leu, but not N-acetyl-L-Leu by module 1 suggests the N-terminal acetylation occurs at a later stage of biosynthesis. Similar to M1 and M3, M4 has a broad substrate spectrum showing the highest activity with L-Phe followed by other hydrophobic amino acids (L-Phe &gt; L-Met = L-Trp). In contrast, M2, M5 and M6 are highly specific for L-Arg, L-Thr, and L-Trp, respectively. Solely, M7 converted its preferred substrate (L-Phe) with a 15 000-fold reduced turnover rate compared to the most active module M6, indicating that its A domain cannot contribute to the malpinin biosynthesis due to low activity. Since the last T domain in malA is apparently not loaded with an amino acid, either the TE domain must offload the oligopeptide from the preceding T domain or the dual E/C domain of M7 must transfer the final peptide chain to the free acceptor T domain of M7 prior to release. This chain is Malpinin synthetase, found in Mortierella alpina (Oleaginous fungus).